We begin with the raw amino-acid sequence, 228 residues long: FtsZ-localized protein A (228 aa).

The GST N-terminal domain occupies 3–85 (VERTLHHFPL…HIEETETEPP (83 aa)). In terms of domain architecture, GST C-terminal spans 90-223 (DPAERAEARR…WPGLAPAAHY (134 aa)).

This sequence belongs to the GST superfamily. Homodimer. Interacts with FtsZ filaments. Probably interacts with the GTPase domain of FtsZ.

The protein localises to the cytoplasm. In terms of biological role, essential cell division protein that must bind to FtsZ for division to occur. Critical coordinator of envelope constriction through its interaction with FtsZ. Promotes the formation of highly curved FtsZ filaments, reduces the GTPase activity of FtsZ and stabilizes FtsZ polymers. May regulate FtsZ function by modulating its superstructure. Does not bind to glutathione. The protein is FtsZ-localized protein A of Caulobacter vibrioides (strain NA1000 / CB15N) (Caulobacter crescentus).